The chain runs to 382 residues: Probable trehalose-phosphate phosphatase 2 (382 aa).

The protein belongs to the trehalose phosphatase family. Requires a divalent metal cation as cofactor. As to expression, expressed in roots and shoots.

The catalysed reaction is alpha,alpha-trehalose 6-phosphate + H2O = alpha,alpha-trehalose + phosphate. It functions in the pathway glycan biosynthesis; trehalose biosynthesis. Its function is as follows. Removes the phosphate from trehalose 6-phosphate to produce free trehalose. Trehalose accumulation in plant may improve abiotic stress tolerance. In Oryza sativa subsp. japonica (Rice), this protein is Probable trehalose-phosphate phosphatase 2 (TPP2).